Here is a 609-residue protein sequence, read N- to C-terminus: Arginine--tRNA ligase (609 aa).

The short motif at A132–H142 is the 'HIGH' region element.

The protein belongs to the class-I aminoacyl-tRNA synthetase family. As to quaternary structure, monomer.

It is found in the cytoplasm. The enzyme catalyses tRNA(Arg) + L-arginine + ATP = L-arginyl-tRNA(Arg) + AMP + diphosphate. This is Arginine--tRNA ligase from Psychrobacter sp. (strain PRwf-1).